The sequence spans 667 residues: Coiled-coil domain-containing protein 154 (667 aa).

Coiled-coil stretches lie at residues 76–182, 215–302, 384–410, and 457–521; these read VVEL…QEAG, RRVD…GQHE, LLRE…SGHL, and LRGV…KEDN.

The protein resides in the early endosome. The chain is Coiled-coil domain-containing protein 154 from Homo sapiens (Human).